A 77-amino-acid chain; its full sequence is MAFLKKSLFLILFLGLVPLSFCENDKREGENEEEQDDDQSEEKRALGTLLKGVGSAVATVGKMVADQFGKLLQAGQG.

The N-terminal stretch at 1–22 is a signal peptide; that stretch reads MAFLKKSLFLILFLGLVPLSFC. Positions 23 to 44 are excised as a propeptide; the sequence is ENDKREGENEEEQDDDQSEEKR. Glutamine amide is present on glutamine 76.

Expressed by the skin glands.

It localises to the secreted. Its subcellular location is the target cell membrane. Antimicrobial peptide with potent activity against Gram-positive bacteria B.megaterium, C.glutamicum and S.aureus and mollicutes A.laidlawii and S.melliferum. Less active against Gram-negative bacteria B.cepacia, P.aeruginosa, S.typhimurium and S.meliloti. Probably acts by disturbing membrane functions with its amphipathic structure. The protein is Dermatoxin-S1 of Phyllomedusa sauvagei (Sauvage's leaf frog).